Here is a 226-residue protein sequence, read N- to C-terminus: Probable GPI-anchored adhesin-like protein PGA28 (226 aa).

The N-terminal stretch at 1–26 is a signal peptide; that stretch reads MKFFAYFAVIALSSASLINLFKRATA. The interval 119–209 is disordered; the sequence is DTEATTGSDT…SQQTSSHAGG (91 aa). Residues 131 to 148 are compositionally biased toward low complexity; the sequence is KAATGATTSAGTGVTKTS. Residues 149–160 are compositionally biased toward polar residues; that stretch reads ETGGVSSTANSE. Low complexity predominate over residues 161 to 208; that stretch reads AKSGSVTTSKSGSTSISESKTTSGSSSSGKSSSSTSSASSQQTSSHAG. Residue Ser197 is the site of GPI-anchor amidated serine attachment. The propeptide at 198 to 226 is removed in mature form; that stretch reads ASSQQTSSHAGGASGAFVSLLGLFAALLI.

Post-translationally, predicted to be a cleavage substrate for KEX2.

The protein resides in the cell membrane. In terms of biological role, putative adhesin which is involved in cell adhesion and virulence. Plays a role in Candida-bacterial interactions and subsequent regulation of filamentation. The sequence is that of Probable GPI-anchored adhesin-like protein PGA28 (PGA28) from Candida albicans (strain SC5314 / ATCC MYA-2876) (Yeast).